The following is a 162-amino-acid chain: Transcription elongation factor GreA (162 aa).

A coiled-coil region spans residues 45–75; sequence ENAEYEAAREKQAFIEGRIKELEDMAARAEI.

Belongs to the GreA/GreB family.

Its function is as follows. Necessary for efficient RNA polymerase transcription elongation past template-encoded arresting sites. The arresting sites in DNA have the property of trapping a certain fraction of elongating RNA polymerases that pass through, resulting in locked ternary complexes. Cleavage of the nascent transcript by cleavage factors such as GreA or GreB allows the resumption of elongation from the new 3'terminus. GreA releases sequences of 2 to 3 nucleotides. The protein is Transcription elongation factor GreA of Rickettsia canadensis (strain McKiel).